Reading from the N-terminus, the 277-residue chain is Small ribosomal subunit protein mS23 (277 aa).

2 disordered regions span residues 48 to 85 (APSHPVVKQRMRTVPGKSKPQLEIKSSAGRKQTSKKPS) and 232 to 277 (LAAF…GPPI). Acidic residues predominate over residues 244–269 (ESGESEDEIPLIEEEDAIGASEESET).

This sequence belongs to the mitochondrion-specific ribosomal protein mS23 family. Component of the mitochondrial small ribosomal subunit.

The protein resides in the mitochondrion. The chain is Small ribosomal subunit protein mS23 (RSM25) from Ajellomyces capsulatus (strain NAm1 / WU24) (Darling's disease fungus).